A 474-amino-acid chain; its full sequence is Protein Rv3254 (474 aa).

Residues 1–4 constitute a propeptide that is removed on maturation; sequence MTGR.

This Mycobacterium tuberculosis (strain ATCC 25618 / H37Rv) protein is Protein Rv3254.